The chain runs to 358 residues: 3-dehydroquinate synthase (358 aa).

NAD(+) contacts are provided by residues 69–74 (DGEQYK), 103–107 (GVIGD), 127–128 (TT), Lys140, Lys149, and 167–170 (TLNT). Glu182, His245, and His262 together coordinate Zn(2+).

This sequence belongs to the sugar phosphate cyclases superfamily. Dehydroquinate synthase family. Requires Co(2+) as cofactor. Zn(2+) serves as cofactor. It depends on NAD(+) as a cofactor.

It is found in the cytoplasm. The enzyme catalyses 7-phospho-2-dehydro-3-deoxy-D-arabino-heptonate = 3-dehydroquinate + phosphate. The protein operates within metabolic intermediate biosynthesis; chorismate biosynthesis; chorismate from D-erythrose 4-phosphate and phosphoenolpyruvate: step 2/7. Catalyzes the conversion of 3-deoxy-D-arabino-heptulosonate 7-phosphate (DAHP) to dehydroquinate (DHQ). The protein is 3-dehydroquinate synthase of Hydrogenovibrio crunogenus (strain DSM 25203 / XCL-2) (Thiomicrospira crunogena).